A 241-amino-acid polypeptide reads, in one-letter code: Acetoacetyl-CoA reductase (241 aa).

NADP(+)-binding positions include 12–14 and 82–86; these read RGI and NAGIT. Substrate-binding positions include aspartate 88 and 141 to 144; that span reads QMGQ. The active-site Proton acceptor is tyrosine 147. 177 to 180 serves as a coordination point for NADP(+); that stretch reads PGYI. 178 to 179 contributes to the substrate binding site; that stretch reads GY.

The protein belongs to the short-chain dehydrogenases/reductases (SDR) family.

Its subcellular location is the cytoplasm. It catalyses the reaction a (3R)-3-hydroxyacyl-CoA + NADP(+) = a 3-oxoacyl-CoA + NADPH + H(+). It functions in the pathway biopolymer metabolism; poly-(R)-3-hydroxybutanoate biosynthesis. The polypeptide is Acetoacetyl-CoA reductase (Shinella zoogloeoides (Crabtreella saccharophila)).